The sequence spans 328 residues: 5'-AMP-activated protein kinase subunit gamma (328 aa).

CBS domains lie at 42-103 (VSYR…PDKF), 123-186 (IQPY…CKEI), 199-259 (ISTN…YNDL), and 268-328 (MRRS…FAES). ADP contacts are provided by residues isoleucine 47, arginine 150, arginine 151, 171 to 174 (TQYR), 227 to 228 (SS), and 297 to 299 (RVH). AMP is bound at residue arginine 150. Residue arginine 150 coordinates ATP. 227–228 (SS) contributes to the AMP binding site. 227-228 (SS) contributes to the ATP binding site. ATP-binding positions include arginine 300 and 313–318 (VLTLSD). 315–318 (TLSD) serves as a coordination point for ADP. Residue 315 to 318 (TLSD) participates in AMP binding.

Belongs to the 5'-AMP-activated protein kinase gamma subunit family. In terms of assembly, AMPK is a heterotrimer of an alpha catalytic subunit, a beta and a gamma non-catalytic subunits.

Its subcellular location is the nucleus. The protein localises to the cytoplasm. Adenine nucleotides-binding subunit gamma of AMP-activated protein kinase (AMPK), an energy sensor protein kinase that plays a key role in regulating cellular energy metabolism. In response to reduction of intracellular ATP levels, AMPK activates energy-producing pathways and inhibits energy-consuming processes: inhibits protein, carbohydrate and lipid biosynthesis, as well as cell growth and proliferation. AMPK acts via direct phosphorylation of metabolic enzymes, and by longer-term effects via phosphorylation of transcription regulators. Gamma non-catalytic subunit mediates binding to AMP, ADP and ATP, leading to activate or inhibit AMPK: AMP-binding results in allosteric activation of alpha catalytic subunit (SNF1) both by inducing phosphorylation and preventing dephosphorylation of catalytic subunits. In Kluyveromyces lactis (strain ATCC 8585 / CBS 2359 / DSM 70799 / NBRC 1267 / NRRL Y-1140 / WM37) (Yeast), this protein is 5'-AMP-activated protein kinase subunit gamma (SNF4).